The following is a 203-amino-acid chain: Histone deacetylase HDT4 (203 aa).

The required to repress transcription stretch occupies residues 2-5; sequence EFWG. Residues 121-203 form a disordered region; the sequence is AALPQNEINP…PFPCGPSCKK (83 aa). Acidic residues predominate over residues 129 to 157; that stretch reads NPEEDDESDSDEMGLDEDDDSSDEEDVEA. A compositionally biased stretch (basic residues) spans 180-193; that stretch reads GGKKNKSSGGKKRC.

This sequence belongs to the histone deacetylase HD2 family. Confined to stems and flowers with young siliques.

It localises to the nucleus. Its subcellular location is the nucleolus. Functionally, probably mediates the deacetylation of lysine residues lysine residues on the N-terminal part of the core histones (H2A, H2B, H3 and H4). Histone deacetylation gives a tag for epigenetic repression and plays an important role in transcriptional regulation, cell cycle progression and developmental events. This is Histone deacetylase HDT4 (HDT4) from Arabidopsis thaliana (Mouse-ear cress).